A 214-amino-acid chain; its full sequence is Inner membrane-spanning protein YciB (214 aa).

Transmembrane regions (helical) follow at residues 11–31 (ILFF…VAII), 50–70 (MHII…ILQD), 81–101 (VNWG…KPII), 119–139 (LSYM…YVAY), and 149–169 (FKLF…GVYI).

The protein belongs to the YciB family.

The protein resides in the cell inner membrane. Plays a role in cell envelope biogenesis, maintenance of cell envelope integrity and membrane homeostasis. This Hydrogenovibrio crunogenus (strain DSM 25203 / XCL-2) (Thiomicrospira crunogena) protein is Inner membrane-spanning protein YciB.